A 133-amino-acid chain; its full sequence is Small ribosomal subunit protein uS8 (133 aa).

It belongs to the universal ribosomal protein uS8 family. As to quaternary structure, part of the 30S ribosomal subunit. Contacts proteins S5 and S12.

Its function is as follows. One of the primary rRNA binding proteins, it binds directly to 16S rRNA central domain where it helps coordinate assembly of the platform of the 30S subunit. This Chloroflexus aggregans (strain MD-66 / DSM 9485) protein is Small ribosomal subunit protein uS8.